The sequence spans 349 residues: Mitogen-activated protein kinase sty1 (349 aa).

In terms of domain architecture, Protein kinase spans 20–299 (YSDLQPIGMG…AADALAHNYL (280 aa)). ATP contacts are provided by residues 26–34 (IGMGAFGLV) and Lys-49. Catalysis depends on Asp-141, which acts as the Proton acceptor. Thr-171 is modified (phosphothreonine). A TXY motif is present at residues 171–173 (TGY). Tyr-173 bears the Phosphotyrosine mark. Ser-175 carries the phosphoserine modification. Thr-176 is subject to Phosphothreonine. A TXY motif is present at residues 176 to 178 (TRY).

The protein belongs to the protein kinase superfamily. Ser/Thr protein kinase family. MAP kinase subfamily. HOG1 sub-subfamily. As to quaternary structure, interacts with cdc37, cmk2, hal4, sin1 and srk1. It depends on Mg(2+) as a cofactor. Post-translationally, dually phosphorylated on Thr-171 and Tyr-173, which activates the enzyme. Phosphorylated by wis1 in response to osmotic stress, nutrient limitation, hydrogen peroxide and arsenite. Dephosphorylated by pyp1 and pyp2.

The protein localises to the cytoplasm. Its subcellular location is the nucleus. It catalyses the reaction L-seryl-[protein] + ATP = O-phospho-L-seryl-[protein] + ADP + H(+). The catalysed reaction is L-threonyl-[protein] + ATP = O-phospho-L-threonyl-[protein] + ADP + H(+). Activated by the MAPK kinase wisl, and negatively regulated by pypl and pyp2 tyrosine phosphatases. Proline-directed serine/threonine-protein kinase involved in a signal transduction pathway that is activated by changes in the osmolarity of the extracellular environment. Controls osmotic regulation of transcription of target genes. Involved in osmoregulation and stress response pathways leading to an efficient start of sexual differentiation. Supports translation initiation and facilitates adaptation to environmental stress in part through reducing eIF2-alpha phosphorylation. Links the cell-cycle G2/M control with changes in the extracellular environment that affect cell physiology. Phosphorylates atf1 and mkp1. In conjunction with hal4, has a role in the cellular resistance to toxic cations such as Na(+), Li(+) and Ca(2+). Involved in resistance to arsenite, methylglyoxal and hydrogen peroxide. Involved in induction of thermotolerance in mRNA export, as well as in vacuolar fission. This is Mitogen-activated protein kinase sty1 (sty1) from Schizosaccharomyces pombe (strain 972 / ATCC 24843) (Fission yeast).